Reading from the N-terminus, the 38-residue chain is Large ribosomal subunit protein bL36 (38 aa).

It belongs to the bacterial ribosomal protein bL36 family.

The polypeptide is Large ribosomal subunit protein bL36 (Chlorobaculum parvum (strain DSM 263 / NCIMB 8327) (Chlorobium vibrioforme subsp. thiosulfatophilum)).